Here is a 593-residue protein sequence, read N- to C-terminus: ABC1 family protein lscO (593 aa).

Disordered stretches follow at residues 1–29 and 441–467; these read MDVA…GGKK and PYKN…EERK. Composition is skewed to basic and acidic residues over residues 8 to 22 and 457 to 467; these read MERH…DDGT and QRTKETPEERK.

The protein belongs to the protein kinase superfamily. ADCK protein kinase family.

ABC1 family protein; part of the gene cluster that mediates the biosynthesis of the lipopeptide antibiotics leucinostatins that show extensive biological activities, including antimalarial, antiviral, antibacterial, antifungal, and antitumor activities, as well as phytotoxic. The function of lcsO within the leucinostatins biosynthesis has not been identified yet. The chain is ABC1 family protein lscO from Purpureocillium lilacinum (Paecilomyces lilacinus).